Here is a 968-residue protein sequence, read N- to C-terminus: RNA polymerase-associated protein RapA (968 aa).

One can recognise a Helicase ATP-binding domain in the interval 163–332 (EVGQRFAPRV…FARLRLLDPD (170 aa)). An ATP-binding site is contributed by 176 to 183 (DEVGLGKT). Residues 278–281 (DEAH) carry the DEAH box motif. The Helicase C-terminal domain occupies 491–678 (RVDWLIDFLK…GTKARYQELK (188 aa)).

Belongs to the SNF2/RAD54 helicase family. RapA subfamily. As to quaternary structure, interacts with the RNAP. Has a higher affinity for the core RNAP than for the holoenzyme. Its ATPase activity is stimulated by binding to RNAP.

In terms of biological role, transcription regulator that activates transcription by stimulating RNA polymerase (RNAP) recycling in case of stress conditions such as supercoiled DNA or high salt concentrations. Probably acts by releasing the RNAP, when it is trapped or immobilized on tightly supercoiled DNA. Does not activate transcription on linear DNA. Probably not involved in DNA repair. The protein is RNA polymerase-associated protein RapA of Shewanella pealeana (strain ATCC 700345 / ANG-SQ1).